The chain runs to 189 residues: Peptidyl-tRNA hydrolase (189 aa).

Residue Tyr14 coordinates tRNA. The active-site Proton acceptor is His19. TRNA is bound by residues Phe64, Asn66, and Asn112.

Belongs to the PTH family. As to quaternary structure, monomer.

Its subcellular location is the cytoplasm. The enzyme catalyses an N-acyl-L-alpha-aminoacyl-tRNA + H2O = an N-acyl-L-amino acid + a tRNA + H(+). Its function is as follows. Hydrolyzes ribosome-free peptidyl-tRNAs (with 1 or more amino acids incorporated), which drop off the ribosome during protein synthesis, or as a result of ribosome stalling. Catalyzes the release of premature peptidyl moieties from peptidyl-tRNA molecules trapped in stalled 50S ribosomal subunits, and thus maintains levels of free tRNAs and 50S ribosomes. The sequence is that of Peptidyl-tRNA hydrolase from Rhizorhabdus wittichii (strain DSM 6014 / CCUG 31198 / JCM 15750 / NBRC 105917 / EY 4224 / RW1) (Sphingomonas wittichii).